A 217-amino-acid chain; its full sequence is Probable GTP-binding protein EngB (217 aa).

The region spanning 31–205 (VGVEIAFAGR…LAILDAWCHP (175 aa)) is the EngB-type G domain. Residues 39 to 46 (GRSNAGKS), 66 to 70 (GRTQL), 84 to 87 (DLPG), 151 to 154 (TKAD), and 184 to 186 (FSA) contribute to the GTP site. Residues Ser46 and Thr68 each contribute to the Mg(2+) site.

The protein belongs to the TRAFAC class TrmE-Era-EngA-EngB-Septin-like GTPase superfamily. EngB GTPase family. It depends on Mg(2+) as a cofactor.

In terms of biological role, necessary for normal cell division and for the maintenance of normal septation. The chain is Probable GTP-binding protein EngB from Shewanella amazonensis (strain ATCC BAA-1098 / SB2B).